We begin with the raw amino-acid sequence, 181 residues long: Caveolin-1 (181 aa).

Residues 1–107 lie on the Cytoplasmic side of the membrane; it reads MTGGLRDGEK…TKYWCYRLLT (107 aa). Positions 108–128 form an intramembrane region, helical; it reads ALVGIPLALIWGIFFAILSFI. At 129 to 181 the chain is on the cytoplasmic side; the sequence is HIWAVVPCVKSYLIEIHCISRVYSICVHTFCDPLFEAMGKCLGGVRIRTSKEV. 3 S-palmitoyl cysteine lipidation sites follow: cysteine 136, cysteine 146, and cysteine 159.

The protein belongs to the caveolin family. Homooligomer.

It localises to the golgi apparatus membrane. The protein resides in the cell membrane. Its subcellular location is the membrane. The protein localises to the caveola. It is found in the membrane raft. Its function is as follows. May act as a positive regulator of T-cell coactivation. May act as a scaffolding protein within caveolar membranes. Interacts directly with G-protein alpha subunits and can functionally regulate their activity. The chain is Caveolin-1 (cav1) from Takifugu rubripes (Japanese pufferfish).